The chain runs to 496 residues: MGRRALLLLLLSFLAPWTTIALRPALRALGSLHLPTNPTSLPAVAKNYSVLYFQQKVDHFGFNTVKTFNQRYLVADKYWKKNGGSILFYTGNEGDIIWFCNNTGFMWDVAEELKAMLVFAEHRYYGESLPFGDNTFKDSRHLNFLTSEQALADFAELIKHLKRTIPGAENQPVIAIGGSYGGMLAAWFRMKYPHMVVGALAASAPIWQFEDLVPCGVFMKIVTTDFRKSGPHCSESIRRSWDAINRLSNTGSGLQWLTGALHLCSPLTSQDIQHLKDWISETWVNLAMVDYPYASNFLQPLPAWPIKVVCQYLKNPNVSDSLLLQNIFQALNVYYNYSGQVKCLNISETATSSLGTLGWSYQACTEVVMPFCTNGVDDMFEPHSWNLKELSDDCFQQWGVRPRPSWITTMYGGKNISSHTNIVFSNGELDPWSGGGVTKDITDTLVAVTISEGAHHLDLRTKNALDPTSVLLARSLEVRHMKNWIRDFYDSAGKQH.

An N-terminal signal peptide occupies residues M1–A21. Positions L22–A45 are excised as a propeptide. N-linked (GlcNAc...) asparagine glycans are attached at residues N47 and N101. The active-site Charge relay system is S179. An SKS domain region spans residues H194 to Y334. 4 cysteine pairs are disulfide-bonded: C215–C372, C233–C310, C264–C343, and C364–C394. N-linked (GlcNAc...) asparagine glycosylation is found at N317, N336, and N345. A glycan (N-linked (GlcNAc...) asparagine) is linked at N415. Residues D430 and H455 each act as charge relay system in the active site.

It belongs to the peptidase S28 family. As to quaternary structure, homodimer.

Its subcellular location is the lysosome. The enzyme catalyses Cleavage of a -Pro-|-Xaa bond to release a C-terminal amino acid.. Functionally, cleaves C-terminal amino acids linked to proline in peptides such as angiotensin II, III and des-Arg9-bradykinin. This cleavage occurs at acidic pH, but enzymatic activity is retained with some substrates at neutral pH. This chain is Lysosomal Pro-X carboxypeptidase (PRCP), found in Pongo abelii (Sumatran orangutan).